Consider the following 73-residue polypeptide: MKAGIHPEYKAVNATCSCGNSFVFNSTLDKESIHLDVCDKCHPFYTGKQRIVDTGGRVDRFNKRFGALSSGKK.

Zn(2+)-binding residues include Cys-16, Cys-18, Cys-38, and Cys-41.

It belongs to the bacterial ribosomal protein bL31 family. Type A subfamily. Part of the 50S ribosomal subunit. It depends on Zn(2+) as a cofactor.

Its function is as follows. Binds the 23S rRNA. The polypeptide is Large ribosomal subunit protein bL31 (Vibrio vulnificus (strain CMCP6)).